Here is a 152-residue protein sequence, read N- to C-terminus: Protein SprT-like (152 aa).

In terms of domain architecture, SprT-like spans 7–147 (QRLVEEVSLQ…CGKCKGKLKP (141 aa)). Zn(2+) is bound at residue histidine 67. The active site involves glutamate 68. Histidine 71 provides a ligand contact to Zn(2+).

Belongs to the SprT family. Requires Zn(2+) as cofactor.

Its subcellular location is the cytoplasm. In Bacillus cereus (strain B4264), this protein is Protein SprT-like.